The sequence spans 515 residues: Serine/threonine-protein phosphatase PP-Z (515 aa).

The tract at residues 1-186 (MGQGSSKHAD…SSTDPDDPET (186 aa)) is disordered. The segment covering 17–30 (PSFSRSDTQGSIKS) has biased composition (polar residues). A Phosphoserine modification is found at serine 18. The segment covering 40–51 (KGKDSNHDRRTS) has biased composition (basic and acidic residues). The segment covering 63 to 74 (ETPPSLPPPPSP) has biased composition (pro residues). Residues 91-109 (DSGNSSQSPTSPHPSNQPA) show a composition bias toward polar residues. Low complexity predominate over residues 126-143 (SSSSYAVSPTSPTSPTSS). Residues aspartate 248, histidine 250, aspartate 276, and asparagine 308 each contribute to the Mn(2+) site. Catalysis depends on histidine 309, which acts as the Proton donor. 2 residues coordinate Mn(2+): histidine 357 and histidine 432. Serine 505 and serine 514 each carry phosphoserine.

This sequence belongs to the PPP phosphatase family. PP-Z subfamily. Mn(2+) serves as cofactor.

It localises to the cytoplasm. It carries out the reaction O-phospho-L-seryl-[protein] + H2O = L-seryl-[protein] + phosphate. The enzyme catalyses O-phospho-L-threonyl-[protein] + H2O = L-threonyl-[protein] + phosphate. This is Serine/threonine-protein phosphatase PP-Z (pzh1) from Schizosaccharomyces pombe (strain 972 / ATCC 24843) (Fission yeast).